The chain runs to 150 residues: Transcriptional regulator MraZ (150 aa).

2 consecutive SpoVT-AbrB domains span residues 9-54 (QSIH…PPEE) and 83-126 (AEEC…NKST).

The protein belongs to the MraZ family. In terms of assembly, forms oligomers.

It is found in the cytoplasm. The protein resides in the nucleoid. This Syntrophobacter fumaroxidans (strain DSM 10017 / MPOB) protein is Transcriptional regulator MraZ.